The sequence spans 344 residues: Nicotinate-nucleotide--dimethylbenzimidazole phosphoribosyltransferase (344 aa).

E310 (proton acceptor) is an active-site residue.

It belongs to the CobT family.

It catalyses the reaction 5,6-dimethylbenzimidazole + nicotinate beta-D-ribonucleotide = alpha-ribazole 5'-phosphate + nicotinate + H(+). It functions in the pathway nucleoside biosynthesis; alpha-ribazole biosynthesis; alpha-ribazole from 5,6-dimethylbenzimidazole: step 1/2. Catalyzes the synthesis of alpha-ribazole-5'-phosphate from nicotinate mononucleotide (NAMN) and 5,6-dimethylbenzimidazole (DMB). The sequence is that of Nicotinate-nucleotide--dimethylbenzimidazole phosphoribosyltransferase from Chromobacterium violaceum (strain ATCC 12472 / DSM 30191 / JCM 1249 / CCUG 213 / NBRC 12614 / NCIMB 9131 / NCTC 9757 / MK).